Consider the following 2399-residue polypeptide: Norsolorinic acid synthase (2399 aa).

The tract at residues 10–247 (LVFGDQTYDF…RQIPIYVPAH (238 aa)) is starter unit:ACP transacylase (SAT) domain. The region spanning 372–805 (KSKLAIVSMS…GGNTALLIED (434 aa)) is the Ketosynthase family 3 (KS3) domain. Catalysis depends on for beta-ketoacyl synthase activity residues C544, H679, and H722. The malonyl-CoA:ACP transacylase (MAT) domain stretch occupies residues 905–1192 (FAFTGQGSQY…LCGMIKNILG (288 aa)). Catalysis depends on S995, which acts as the For acyl/malonyl transferase activity. Positions 1307–1327 (VQEAPAAKTETKKMSKLDPTK) are disordered. Basic and acidic residues predominate over residues 1315–1327 (TETKKMSKLDPTK). The interval 1340-1483 (HKVIEEKTEP…CTVRFTTDSQ (144 aa)) is N-terminal hotdog fold. The region spanning 1340-1658 (HKVIEEKTEP…LRSVPRKALR (319 aa)) is the PKS/mFAS DH domain. The product template (PT) domain stretch occupies residues 1353 to 1658 (QFTVETDISR…LRSVPRKALR (306 aa)). Residue H1372 is the Proton acceptor; for dehydratase activity of the active site. A C-terminal hotdog fold region spans residues 1510-1658 (LTHYNTKSGY…LRSVPRKALR (149 aa)). The active-site Proton donor; for dehydratase activity is the D1570. Residues 1665-1734 (MDKGIRQRGG…AALKASVPKA (70 aa)) form a disordered region. Positions 1677 to 1698 (GAAKGAVAAPAPAKKMVEPVKA) are enriched in low complexity. The span at 1708–1723 (AAPPSPSKAAPPPAPK) shows a compositional bias: pro residues. Residues 1724-1734 (PAALKASVPKA) are compositionally biased toward low complexity. 3 consecutive Carrier domains span residues 1733-1812 (KADP…AGAA), 1877-1953 (SKVF…GGSG), and 2020-2099 (VART…TGSS). O-(pantetheine 4'-phosphoryl)serine is present on residues S1770, S1911, and S2057. Low complexity predominate over residues 2098 to 2115 (SSADSDSSSVASNPADPA). The segment at 2098 to 2149 (SSADSDSSSVASNPADPAATPPRSESSDTEPDDEAPSKPKSGPGSTDSCRST) is disordered. Polar residues predominate over residues 2140–2149 (PGSTDSCRST). The interval 2164–2393 (TLFLLPDGGG…KARVNYVSDL (230 aa)) is thioesterase/Claisen cyclase (TE/CLC) domain. Catalysis depends on S2234, which acts as the For thioesterase activity.

It depends on pantetheine 4'-phosphate as a cofactor.

It catalyses the reaction hexanoyl-[ACP] + 7 malonyl-CoA + 6 H(+) = noranthrone + holo-[ACP] + 7 CO2 + 7 CoA + 2 H2O. It participates in mycotoxin biosynthesis. Polyketide synthase; part of the fragmented gene cluster that mediates the biosynthesis of dothistromin (DOTH), a polyketide toxin very similar in structure to the aflatoxin precursor, versicolorin B. The first step of the pathway is the conversion of acetate to norsolorinic acid (NOR) and requires the fatty acid synthase subunits hexA and hexB, as well as the polyketide synthase pksA. PksA combines a hexanoyl starter unit and 7 malonyl-CoA extender units to synthesize the precursor NOR. The hexanoyl starter unit is provided to the acyl-carrier protein (ACP) domain by the fungal fatty acid synthase hexA/hexB. The second step is the conversion of NOR to averantin (AVN) and requires the norsolorinic acid ketoreductase nor1, which catalyzes the dehydration of norsolorinic acid to form (1'S)-averantin. The cytochrome P450 monooxygenase avnA then catalyzes the hydroxylation of AVN to 5'hydroxyaverantin (HAVN). The next step is performed by adhA that transforms HAVN to averufin (AVF). Averufin might then be converted to hydroxyversicolorone by cypX and avfA. Hydroxyversicolorone is further converted versiconal hemiacetal acetate (VHA) by moxY. VHA is then the substrate for the versiconal hemiacetal acetate esterase est1 to yield versiconal (VAL). Versicolorin B synthase vbsA then converts VAL to versicolorin B (VERB) by closing the bisfuran ring. Then, the activity of the versicolorin B desaturase verB leads to versicolorin A (VERA). DotB, a predicted chloroperoxidase, may perform epoxidation of the A-ring of VERA. Alternatively, a cytochrome P450, such as cypX or avnA could catalyze this step. It is also possible that another, uncharacterized, cytochrome P450 enzyme is responsible for this step. Opening of the epoxide could potentially be achieved by the epoxide hydrolase epoA. However, epoA seems not to be required for DOTH biosynthesis, but other epoxide hydrolases may have the ability to complement this hydrolysis. Alternatively, opening of the epoxide ring could be achieved non-enzymatically. The next step is the deoxygenation of ring A to yield the 5,8-dihydroxyanthraquinone which is most likely catalyzed by the NADPH dehydrogenase encoded by ver1. The last stages of DOTH biosynthesis are proposed to involve hydroxylation of the bisfuran. OrdB and norB might have oxidative roles here. An alternative possibility is that cytochrome P450 monoogenases such as avnA and cypX might perform these steps in addition to previously proposed steps. This Dothistroma septosporum (Red band needle blight fungus) protein is Norsolorinic acid synthase.